The following is a 318-amino-acid chain: L-lactate dehydrogenase 1 (318 aa).

NAD(+) contacts are provided by residues valine 17, aspartate 38, lysine 43, tyrosine 69, and 83–84 (GA). Residues glutamine 86, arginine 92, and 124–127 (NPVD) contribute to the substrate site. NAD(+) contacts are provided by residues 122–124 (ATN) and serine 147. 152–155 (DTGR) is a substrate binding site. 2 residues coordinate beta-D-fructose 1,6-bisphosphate: arginine 157 and histidine 172. Catalysis depends on histidine 179, which acts as the Proton acceptor. Tyrosine 224 carries the post-translational modification Phosphotyrosine. Threonine 233 provides a ligand contact to substrate.

Belongs to the LDH/MDH superfamily. LDH family. Homotetramer.

It is found in the cytoplasm. The enzyme catalyses (S)-lactate + NAD(+) = pyruvate + NADH + H(+). Its pathway is fermentation; pyruvate fermentation to lactate; (S)-lactate from pyruvate: step 1/1. Allosterically activated by fructose 1,6-bisphosphate (FBP). Catalyzes the conversion of lactate to pyruvate. This is L-lactate dehydrogenase 1 from Peribacillus psychrosaccharolyticus (Bacillus psychrosaccharolyticus).